Reading from the N-terminus, the 407-residue chain is Phosphoglycerate kinase (407 aa).

Substrate contacts are provided by residues 24–26 (DFN), Arg40, 63–66 (HLGR), Arg121, and Arg154. Residues Lys205, Glu337, and 363–366 (GGDS) contribute to the ATP site.

Belongs to the phosphoglycerate kinase family. As to quaternary structure, monomer.

The protein localises to the cytoplasm. It carries out the reaction (2R)-3-phosphoglycerate + ATP = (2R)-3-phospho-glyceroyl phosphate + ADP. The protein operates within carbohydrate degradation; glycolysis; pyruvate from D-glyceraldehyde 3-phosphate: step 2/5. The chain is Phosphoglycerate kinase from Gloeobacter violaceus (strain ATCC 29082 / PCC 7421).